A 429-amino-acid polypeptide reads, in one-letter code: 3-phosphoshikimate 1-carboxyvinyltransferase (429 aa).

3 residues coordinate 3-phosphoshikimate: lysine 22, serine 23, and arginine 27. Lysine 22 contributes to the phosphoenolpyruvate binding site. Phosphoenolpyruvate is bound by residues glycine 94 and arginine 122. 3-phosphoshikimate contacts are provided by serine 167, glutamine 169, aspartate 315, and lysine 342. Position 169 (glutamine 169) interacts with phosphoenolpyruvate. Aspartate 315 acts as the Proton acceptor in catalysis. Phosphoenolpyruvate-binding residues include arginine 346 and arginine 388.

Belongs to the EPSP synthase family. In terms of assembly, monomer.

It is found in the cytoplasm. It catalyses the reaction 3-phosphoshikimate + phosphoenolpyruvate = 5-O-(1-carboxyvinyl)-3-phosphoshikimate + phosphate. The protein operates within metabolic intermediate biosynthesis; chorismate biosynthesis; chorismate from D-erythrose 4-phosphate and phosphoenolpyruvate: step 6/7. Catalyzes the transfer of the enolpyruvyl moiety of phosphoenolpyruvate (PEP) to the 5-hydroxyl of shikimate-3-phosphate (S3P) to produce enolpyruvyl shikimate-3-phosphate and inorganic phosphate. The chain is 3-phosphoshikimate 1-carboxyvinyltransferase from Citrifermentans bemidjiense (strain ATCC BAA-1014 / DSM 16622 / JCM 12645 / Bem) (Geobacter bemidjiensis).